The following is a 258-amino-acid chain: Short-chain dehydrogenase reductase 3c (258 aa).

Position 12–36 (12–36 (IITGGASGIGADAARLFTDHGAKVV)) interacts with NAD(+). A substrate-binding site is contributed by S144. The Proton acceptor role is filled by Y156.

It belongs to the short-chain dehydrogenases/reductases (SDR) family.

The chain is Short-chain dehydrogenase reductase 3c (SDR3c) from Arabidopsis thaliana (Mouse-ear cress).